The chain runs to 433 residues: Phosphomethylpyrimidine synthase 1 (433 aa).

Substrate is bound by residues Asn66, Met94, Tyr123, His162, 184–186 (SRG), 225–228 (DALR), and Glu264. A Zn(2+)-binding site is contributed by His268. Tyr291 serves as a coordination point for substrate. His332 is a binding site for Zn(2+). Cys408, Cys411, and Cys415 together coordinate [4Fe-4S] cluster.

This sequence belongs to the ThiC family. The cofactor is [4Fe-4S] cluster.

The catalysed reaction is 5-amino-1-(5-phospho-beta-D-ribosyl)imidazole + S-adenosyl-L-methionine = 4-amino-2-methyl-5-(phosphooxymethyl)pyrimidine + CO + 5'-deoxyadenosine + formate + L-methionine + 3 H(+). Its pathway is cofactor biosynthesis; thiamine diphosphate biosynthesis. In terms of biological role, catalyzes the synthesis of the hydroxymethylpyrimidine phosphate (HMP-P) moiety of thiamine from aminoimidazole ribotide (AIR) in a radical S-adenosyl-L-methionine (SAM)-dependent reaction. This Saccharolobus solfataricus (strain ATCC 35092 / DSM 1617 / JCM 11322 / P2) (Sulfolobus solfataricus) protein is Phosphomethylpyrimidine synthase 1.